The sequence spans 200 residues: MQSSPLLEHLIENLRCLPGVGPKSAQRMAYHLLQRNRSGGMNLARALTEAMSKIGHCSQCRDFTEEDTCNICNNPRRQNSGLLCVVEMPADIQAIEQTGQFSGRYFVLMGHLSPLDGIGPREIGLDLLQKRLVEESFHEVILATNPTVEGDATANYIAEMCRQHNIKVSRIAHGIPVGGELETVDGTTLTHSFLGRRQID.

The C4-type zinc finger occupies 57–72 (CSQCRDFTEEDTCNIC). Residues 81 to 176 (GLLCVVEMPA…KVSRIAHGIP (96 aa)) form the Toprim domain.

This sequence belongs to the RecR family.

May play a role in DNA repair. It seems to be involved in an RecBC-independent recombinational process of DNA repair. It may act with RecF and RecO. This chain is Recombination protein RecR, found in Haemophilus influenzae (strain 86-028NP).